Consider the following 254-residue polypeptide: Small ribosomal subunit protein eS1 (254 aa).

An N-acetylalanine; partial modification is found at alanine 2.

Belongs to the eukaryotic ribosomal protein eS1 family. Component of the small ribosomal subunit. Mature ribosomes consist of a small (40S) and a large (60S) subunit. The 40S subunit contains about 33 different proteins and 1 molecule of RNA (18S). The 60S subunit contains about 49 different proteins and 3 molecules of RNA (25S, 5.8S and 5S).

The protein localises to the cytoplasm. The polypeptide is Small ribosomal subunit protein eS1 (Zygosaccharomyces rouxii (strain ATCC 2623 / CBS 732 / NBRC 1130 / NCYC 568 / NRRL Y-229)).